A 115-amino-acid polypeptide reads, in one-letter code: Phosphoribosyl-ATP pyrophosphatase (115 aa).

Belongs to the PRA-PH family.

It is found in the cytoplasm. The enzyme catalyses 1-(5-phospho-beta-D-ribosyl)-ATP + H2O = 1-(5-phospho-beta-D-ribosyl)-5'-AMP + diphosphate + H(+). Its pathway is amino-acid biosynthesis; L-histidine biosynthesis; L-histidine from 5-phospho-alpha-D-ribose 1-diphosphate: step 2/9. In Bordetella parapertussis (strain 12822 / ATCC BAA-587 / NCTC 13253), this protein is Phosphoribosyl-ATP pyrophosphatase.